The chain runs to 261 residues: Phosphate import ATP-binding protein PstB (261 aa).

One can recognise an ABC transporter domain in the interval 15–256; the sequence is LQVRRLNFYY…PAHQETENYI (242 aa). 47 to 54 is an ATP binding site; that stretch reads GPSGCGKS.

Belongs to the ABC transporter superfamily. Phosphate importer (TC 3.A.1.7) family. In terms of assembly, the complex is composed of two ATP-binding proteins (PstB), two transmembrane proteins (PstC and PstA) and a solute-binding protein (PstS).

Its subcellular location is the cell inner membrane. The catalysed reaction is phosphate(out) + ATP + H2O = ADP + 2 phosphate(in) + H(+). In terms of biological role, part of the ABC transporter complex PstSACB involved in phosphate import. Responsible for energy coupling to the transport system. This Burkholderia sp protein is Phosphate import ATP-binding protein PstB.